Here is a 185-residue protein sequence, read N- to C-terminus: Large ribosomal subunit protein uL5 (185 aa).

The protein belongs to the universal ribosomal protein uL5 family. In terms of assembly, part of the 50S ribosomal subunit; part of the 5S rRNA/L5/L18/L25 subcomplex. Contacts the 5S rRNA and the P site tRNA. Forms a bridge to the 30S subunit in the 70S ribosome.

This is one of the proteins that bind and probably mediate the attachment of the 5S RNA into the large ribosomal subunit, where it forms part of the central protuberance. In the 70S ribosome it contacts protein S13 of the 30S subunit (bridge B1b), connecting the 2 subunits; this bridge is implicated in subunit movement. Contacts the P site tRNA; the 5S rRNA and some of its associated proteins might help stabilize positioning of ribosome-bound tRNAs. The protein is Large ribosomal subunit protein uL5 of Nitrobacter hamburgensis (strain DSM 10229 / NCIMB 13809 / X14).